Here is a 182-residue protein sequence, read N- to C-terminus: ATP synthase subunit delta (182 aa).

Belongs to the ATPase delta chain family. As to quaternary structure, F-type ATPases have 2 components, F(1) - the catalytic core - and F(0) - the membrane proton channel. F(1) has five subunits: alpha(3), beta(3), gamma(1), delta(1), epsilon(1). CF(0) has four main subunits: a(1), b(1), b'(1) and c(10-14). The alpha and beta chains form an alternating ring which encloses part of the gamma chain. F(1) is attached to F(0) by a central stalk formed by the gamma and epsilon chains, while a peripheral stalk is formed by the delta, b and b' chains.

It is found in the cellular thylakoid membrane. F(1)F(0) ATP synthase produces ATP from ADP in the presence of a proton or sodium gradient. F-type ATPases consist of two structural domains, F(1) containing the extramembraneous catalytic core and F(0) containing the membrane proton channel, linked together by a central stalk and a peripheral stalk. During catalysis, ATP synthesis in the catalytic domain of F(1) is coupled via a rotary mechanism of the central stalk subunits to proton translocation. In terms of biological role, this protein is part of the stalk that links CF(0) to CF(1). It either transmits conformational changes from CF(0) to CF(1) or is implicated in proton conduction. This is ATP synthase subunit delta from Parasynechococcus marenigrum (strain WH8102).